Here is a 216-residue protein sequence, read N- to C-terminus: Large ribosomal subunit protein uL3 (216 aa).

Residues 132 to 155 form a disordered region; sequence QDASHGNSRSHRVPGSIGQNQTPG. The residue at position 152 (Q152) is an N5-methylglutamine.

This sequence belongs to the universal ribosomal protein uL3 family. As to quaternary structure, part of the 50S ribosomal subunit. Forms a cluster with proteins L14 and L19. Methylated by PrmB.

One of the primary rRNA binding proteins, it binds directly near the 3'-end of the 23S rRNA, where it nucleates assembly of the 50S subunit. This Legionella pneumophila (strain Paris) protein is Large ribosomal subunit protein uL3.